Reading from the N-terminus, the 310-residue chain is MGNQIKSVMLLTAMTAFLLIVGQLIGGRAGMTFALIMAVGMNFFSYWYSDKIVLKMYRAKEVNPGQALELYGIVQRLSSNAGLPMPKVYIIPQQAPNAFATGRNPDHAVVAVTEGLLNLMNREELAGVLAHELAHVKNRDILIGTIAATMAGAVMFLASMAKWGAIFGGFGGNDDDSPLGFAGMLIMAILAPIGAALIQMTISRTREYQADATGAQIAGNPKGLANALAKLGAYSGRIPMDAEPATAHMFIVNPLSGKSLATLFSTHPPLEERIARLTGARPQSGGAPSGPERTARNAEDSAKDFWDSLK.

A run of 2 helical transmembrane segments spans residues 7–27 (SVML…LIGG) and 29–49 (AGMT…YWYS). Residue His-131 participates in Zn(2+) binding. Residue Glu-132 is part of the active site. His-135 serves as a coordination point for Zn(2+). 2 helical membrane-spanning segments follow: residues 141–161 (ILIG…ASMA) and 178–198 (PLGF…AALI). Glu-207 contributes to the Zn(2+) binding site. Positions 277–310 (LTGARPQSGGAPSGPERTARNAEDSAKDFWDSLK) are disordered. The segment covering 293–310 (RTARNAEDSAKDFWDSLK) has biased composition (basic and acidic residues).

This sequence belongs to the peptidase M48B family. Zn(2+) is required as a cofactor.

The protein localises to the cell inner membrane. The sequence is that of Protease HtpX homolog from Desulfatibacillum aliphaticivorans.